A 39-amino-acid chain; its full sequence is Photosystem II reaction center protein L (39 aa).

Residues 18-38 (SLYLGLLLVFVTAVLFTSYFF) traverse the membrane as a helical segment.

This sequence belongs to the PsbL family. As to quaternary structure, PSII is composed of 1 copy each of membrane proteins PsbA, PsbB, PsbC, PsbD, PsbE, PsbF, PsbH, PsbI, PsbJ, PsbK, PsbL, PsbM, PsbT, PsbX, PsbY, Psb30/Ycf12, peripheral proteins PsbO, CyanoQ (PsbQ), PsbU, PsbV and a large number of cofactors. It forms dimeric complexes.

The protein resides in the cellular thylakoid membrane. Its function is as follows. One of the components of the core complex of photosystem II (PSII). PSII is a light-driven water:plastoquinone oxidoreductase that uses light energy to abstract electrons from H(2)O, generating O(2) and a proton gradient subsequently used for ATP formation. It consists of a core antenna complex that captures photons, and an electron transfer chain that converts photonic excitation into a charge separation. This subunit is found at the monomer-monomer interface and is required for correct PSII assembly and/or dimerization. The polypeptide is Photosystem II reaction center protein L (Prochlorococcus marinus (strain MIT 9313)).